Consider the following 502-residue polypeptide: Type II methyltransferase M.HincII (502 aa).

Belongs to the N(4)/N(6)-methyltransferase family.

It catalyses the reaction a 2'-deoxyadenosine in DNA + S-adenosyl-L-methionine = an N(6)-methyl-2'-deoxyadenosine in DNA + S-adenosyl-L-homocysteine + H(+). In terms of biological role, a gamma subtype methylase that recognizes the double-stranded sequence 5'-GTYRAC-3', methylates A-5 on both strands, and protects the DNA from cleavage by the HincII endonuclease. The protein is Type II methyltransferase M.HincII of Haemophilus influenzae.